Reading from the N-terminus, the 67-residue chain is uncharacterized protein (67 aa).

This sequence to E.coli YbdD.

This is an uncharacterized protein from Escherichia coli O157:H7.